We begin with the raw amino-acid sequence, 403 residues long: Aurora kinase A (403 aa).

The segment at 1-125 is disordered; that stretch reads MDRSKENCIS…SKQKNEESKK (125 aa). 2 stretches are compositionally biased toward polar residues: residues 27-83 and 91-101; these read VTQQ…QATS and PLNNTQKSKQP. Phosphoserine occurs at positions 41 and 51. A compositionally biased stretch (basic and acidic residues) spans 114 to 125; the sequence is LASKQKNEESKK. Positions 133–383 constitute a Protein kinase domain; the sequence is FEIGRPLGKG…LREVLEHPWI (251 aa). ATP is bound by residues Lys143, Lys162, and 211-213; that span reads EYA. Asp256 acts as the Proton acceptor in catalysis. Residue Lys258 forms a Glycyl lysine isopeptide (Lys-Gly) (interchain with G-Cter in SUMO2) linkage. Residues 260-261 and Asp274 contribute to the ATP site; that span reads EN. The activation segment stretch occupies residues 280–293; that stretch reads HAPSSRRTTLCGTL. Phosphothreonine is present on residues Thr287 and Thr288. At Ser342 the chain carries Phosphoserine; by PKA and PAK.

This sequence belongs to the protein kinase superfamily. Ser/Thr protein kinase family. Aurora subfamily. In terms of assembly, part of a complex composed of NEDD9, AURKA and CTTN; within the complex NEDD9 acts as a scaffold protein and is required for complex formation. Identified in a complex with AUNIP and NIN. Interacts with FBXL7. Interacts with CPEB1, JTB, TACC1, TPX2, PPP2CA, as well as with the protein phosphatase type 1 (PP1) isoforms PPP1CA, PPP1CB and PPP1CC. Also interacts with its substrates ARHGEF2, BORA, KIF2A, PARD3, and p53/TP53. Interaction with BORA promotes phosphorylation of PLK1. Interacts with CIMAP3. Interacts with GADD45A, competing with its oligomerization. Interacts (via C-terminus) with AUNIP (via C-terminus). Interacts with FRY; this interaction facilitates AURKA-mediated PLK1 phosphorylation. Interacts with SIRT2. Interacts with MYCN; interaction is phospho-independent and triggers AURKA activation; AURKA competes with FBXW7 for binding to unphosphorylated MYCN but not for binding to phosphorylated MYCN. Interacts with HNRNPU. Interacts with AAAS. Interacts with KLHL18 and CUL3. Interacts with FOXP1. Interacts with HDAC6; AURKA-mediated phosphorylation of HDAC6 promotes deacetylation of alpha-tubulin. Activated by phosphorylation at Thr-288; this brings about a change in the conformation of the activation segment. Phosphorylation at Thr-288 varies during the cell cycle and is highest during M phase. Autophosphorylated at Thr-288 upon TPX2 binding. Thr-288 can be phosphorylated by several kinases, including PAK and PKA. Protein phosphatase type 1 (PP1) binds AURKA and inhibits its activity by dephosphorylating Thr-288 during mitosis. Phosphorylation at Ser-342 decreases the kinase activity. PPP2CA controls degradation by dephosphorylating Ser-51 at the end of mitosis. Post-translationally, ubiquitinated by the E3 ubiquitin-protein ligase complex SCF(FBXL7) during mitosis, leading to its degradation by the proteasome. Ubiquitinated by CHFR, leading to its degradation by the proteasome. Ubiquitinated by the anaphase-promoting complex (APC), leading to its degradation by the proteasome. Ubiquitinated by the CUL3-KLHL18 ligase leading to its activation at the centrosome which is required for initiating mitotic entry. Ubiquitination mediated by CUL3-KLHL18 ligase does not lead to its degradation by the proteasome. Highly expressed in testis and weakly in skeletal muscle, thymus and spleen. Also highly expressed in colon, ovarian, prostate, neuroblastoma, breast and cervical cancer cell lines.

The protein resides in the cytoplasm. Its subcellular location is the cytoskeleton. The protein localises to the microtubule organizing center. It is found in the centrosome. It localises to the spindle pole. The protein resides in the centriole. Its subcellular location is the cell projection. The protein localises to the neuron projection. It is found in the cilium. It localises to the cilium basal body. The protein resides in the basolateral cell membrane. The enzyme catalyses L-seryl-[protein] + ATP = O-phospho-L-seryl-[protein] + ADP + H(+). The catalysed reaction is L-threonyl-[protein] + ATP = O-phospho-L-threonyl-[protein] + ADP + H(+). With respect to regulation, activation of CDK1, appears to be an upstream event of AURKA activation. Phosphatase inhibitor-2 (PPP1R2) and TPX2 act also as activators. Inactivated by the G2 checkpoint. Inhibited by GADD45A and p53/TP53, and through dephosphorylation by protein phosphatase type 1 (PP1). MLN8054 is also a potent and selective inhibitor. Activated during the early phase of cilia disassembly in the presence of CIMAP3. Inhibited by the small molecule inhibitor VX-680. Its function is as follows. Mitotic serine/threonine kinase that contributes to the regulation of cell cycle progression. Associates with the centrosome and the spindle microtubules during mitosis and plays a critical role in various mitotic events including the establishment of mitotic spindle, centrosome duplication, centrosome separation as well as maturation, chromosomal alignment, spindle assembly checkpoint, and cytokinesis. Required for normal spindle positioning during mitosis and for the localization of NUMA1 and DCTN1 to the cell cortex during metaphase. Required for initial activation of CDK1 at centrosomes. Phosphorylates numerous target proteins, including ARHGEF2, BORA, BRCA1, CDC25B, DLGP5, HDAC6, KIF2A, LATS2, NDEL1, PARD3, PPP1R2, PLK1, RASSF1, TACC3, p53/TP53 and TPX2. Phosphorylates MCRS1 which is required for MCRS1-mediated kinetochore fiber assembly and mitotic progression. Regulates KIF2A tubulin depolymerase activity. Important for microtubule formation and/or stabilization. Required for normal axon formation. Plays a role in microtubule remodeling during neurite extension. Also acts as a key regulatory component of the p53/TP53 pathway, and particularly the checkpoint-response pathways critical for oncogenic transformation of cells, by phosphorylating and destabilizing p53/TP53. Phosphorylates its own inhibitors, the protein phosphatase type 1 (PP1) isoforms, to inhibit their activity. Inhibits cilia outgrowth. Required for cilia disassembly via phosphorylation of HDAC6 and subsequent deacetylation of alpha-tubulin. Regulates protein levels of the anti-apoptosis protein BIRC5 by suppressing the expression of the SCF(FBXL7) E3 ubiquitin-protein ligase substrate adapter FBXL7 through the phosphorylation of the transcription factor FOXP1. This Homo sapiens (Human) protein is Aurora kinase A.